The following is a 215-amino-acid chain: ER lumen protein-retaining receptor 3 (215 aa).

Residues 1-4 are Lumenal-facing; the sequence is MNIF. Residues 5–24 form a helical membrane-spanning segment; sequence RLSGDVCHLIAIIILFLKIW. Residues 25–32 lie on the Cytoplasmic side of the membrane; that stretch reads RSKSCAGI. A helical membrane pass occupies residues 33–52; the sequence is SGKSQVLFALVFTTRYLDLF. The segment at 47 to 48 is interaction with the K-D-E-L motif on target proteins; it reads RY. Residues 53–58 are Lumenal-facing; that stretch reads TSYISA. Residues 59–79 traverse the membrane as a helical segment; it reads YNTVMKVVYLLLAYSTVGLIF. At 80-92 the chain is on the cytoplasmic side; the sequence is FRFRNSYDSESDS. The helical transmembrane segment at 93 to 110 threads the bilayer; sequence FRVEFLLVPVAGLSFLEN. The Lumenal segment spans residues 111–116; it reads YAFTPL. Residues 117–135 traverse the membrane as a helical segment; it reads EILWTFSIYLESVAILPQL. Residues 136–149 lie on the Cytoplasmic side of the membrane; it reads FMITKTGEAESITA. Residues 150–168 form a helical membrane-spanning segment; it reads HYLLFLGLYRALYLANWLW. Positions 159–169 are interaction with the K-D-E-L motif on target proteins; sequence RALYLANWLWR. Over 169–178 the chain is Lumenal; the sequence is RFHTEGFYDQ. Residues 179–199 form a helical membrane-spanning segment; that stretch reads IAVVSGVVQTIFYCDFFYLYF. Residues 200–215 lie on the Cytoplasmic side of the membrane; the sequence is TRVLRGSGKMSLPMPV. Positions 204 to 208 are important for recycling of cargo proteins with the sequence motif K-D-E-L from the Golgi to the endoplasmic reticulum; it reads RGSGK.

This sequence belongs to the ERD2 family.

Its subcellular location is the endoplasmic reticulum membrane. The protein localises to the golgi apparatus membrane. The protein resides in the cytoplasmic vesicle. It is found in the COPI-coated vesicle membrane. In terms of biological role, receptor for the C-terminal sequence motif K-D-E-L that is present on endoplasmic reticulum resident proteins and that mediates their recycling from the Golgi back to the endoplasmic reticulum. This chain is ER lumen protein-retaining receptor 3 (kdelr3), found in Danio rerio (Zebrafish).